Here is a 319-residue protein sequence, read N- to C-terminus: Lipoyl synthase (319 aa).

7 residues coordinate [4Fe-4S] cluster: Cys66, Cys71, Cys77, Cys92, Cys96, Cys99, and Ser305. Positions 78 to 294 (FNRGTATFMI…KKEALSIGFT (217 aa)) constitute a Radical SAM core domain.

Belongs to the radical SAM superfamily. Lipoyl synthase family. [4Fe-4S] cluster is required as a cofactor.

It localises to the cytoplasm. It catalyses the reaction [[Fe-S] cluster scaffold protein carrying a second [4Fe-4S](2+) cluster] + N(6)-octanoyl-L-lysyl-[protein] + 2 oxidized [2Fe-2S]-[ferredoxin] + 2 S-adenosyl-L-methionine + 4 H(+) = [[Fe-S] cluster scaffold protein] + N(6)-[(R)-dihydrolipoyl]-L-lysyl-[protein] + 4 Fe(3+) + 2 hydrogen sulfide + 2 5'-deoxyadenosine + 2 L-methionine + 2 reduced [2Fe-2S]-[ferredoxin]. The protein operates within protein modification; protein lipoylation via endogenous pathway; protein N(6)-(lipoyl)lysine from octanoyl-[acyl-carrier-protein]: step 2/2. In terms of biological role, catalyzes the radical-mediated insertion of two sulfur atoms into the C-6 and C-8 positions of the octanoyl moiety bound to the lipoyl domains of lipoate-dependent enzymes, thereby converting the octanoylated domains into lipoylated derivatives. This Buchnera aphidicola subsp. Schizaphis graminum (strain Sg) protein is Lipoyl synthase.